A 394-amino-acid chain; its full sequence is Small ribosomal subunit protein mS79 (rPPR3b) (394 aa).

The N-terminal 24 residues, 1 to 24, are a transit peptide targeting the mitochondrion; the sequence is MSSLSRFLLRGNFSFSTHTNRRFF. PPR repeat units follow at residues 105 to 139, 140 to 170, 176 to 210, 211 to 245, 246 to 280, 281 to 315, 316 to 350, and 351 to 385; these read KEGF…NCKR, TALS…LPGK, DVAS…GLKP, DHIT…NVKR, DIRS…ELKP, DVFT…GCRP, LKFV…RLLV, and DEAV…DYLQ.

It belongs to the PPR family. P subfamily. In terms of assembly, component of the mitochondrial ribosome small subunit.

Its subcellular location is the mitochondrion. This is Small ribosomal subunit protein mS79 (rPPR3b) from Arabidopsis thaliana (Mouse-ear cress).